Consider the following 530-residue polypeptide: Inactive ubiquitin carboxyl-terminal hydrolase 17-like protein 8 (530 aa).

The USP domain occupies 80–375 (AGLQNMGNTC…QAYVLFYIQK (296 aa)). Positions 382-392 (SESVSRGREPR) are enriched in basic and acidic residues. Disordered stretches follow at residues 382–412 (SESV…KRDH) and 493–530 (NSTD…LVCQ). Residues 495–510 (TDQESMNTGTLASLQG) show a composition bias toward polar residues. The segment covering 511-524 (RTRRSKGKNKHSKR) has biased composition (basic residues).

Belongs to the peptidase C19 family. USP17 subfamily.

The protein resides in the nucleus. It is found in the endoplasmic reticulum. The protein is Inactive ubiquitin carboxyl-terminal hydrolase 17-like protein 8 (USP17L8) of Homo sapiens (Human).